We begin with the raw amino-acid sequence, 347 residues long: Twinfilin-2 (347 aa).

ADF-H domains lie at Leu-3–Thr-137 and Gly-175–His-311. The tract at residues Gln-314–Ser-347 is disordered. Residues Lys-338–Ser-347 are compositionally biased toward gly residues.

This sequence belongs to the actin-binding proteins ADF family. Twinfilin subfamily. Interacts with G-actin; ADP-actin form and capping protein (CP).

It localises to the cytoplasm. The protein localises to the cytoskeleton. It is found in the perinuclear region. Its function is as follows. Actin-binding protein involved in motile and morphological processes. Inhibits actin polymerization, likely by sequestering G-actin. The chain is Twinfilin-2 (twf2) from Danio rerio (Zebrafish).